A 161-amino-acid polypeptide reads, in one-letter code: Regulatory protein RecX (161 aa).

This sequence belongs to the RecX family.

The protein resides in the cytoplasm. Functionally, modulates RecA activity. The polypeptide is Regulatory protein RecX (Halorhodospira halophila (strain DSM 244 / SL1) (Ectothiorhodospira halophila (strain DSM 244 / SL1))).